The chain runs to 316 residues: MENVTTMNEFLLLGLTGVQELQPFFFGIFLIIYLINLIGNGSILVMVVLEPQLHSPMYFFLGNLSCLDISYSSVTLPKLLVNLVCSRRAISFLGCITQLHFFHFLGSTEAILLAIMAFDRFVAICNPLRYTVIMNPQVCILLAAAAWLISFFYALMHSVMTAHLSFCGSQKLNHFFYDVKPLLELACSDTLLNQWLLSIVTGSISMGAFFLTLLSCFYVIGFLLFKNRSCRILHKALSTCASHFMVVCLFYGPVGFTYIRPASATSMIQDRIMAIMYSAVTPVLNPLIYTLRNKEVMMALKKIFGRKLFKDWQQHH.

Topologically, residues 1-23 are extracellular; it reads MENVTTMNEFLLLGLTGVQELQP. Asparagine 3 carries N-linked (GlcNAc...) asparagine glycosylation. The helical transmembrane segment at 24–44 threads the bilayer; that stretch reads FFFGIFLIIYLINLIGNGSIL. The Cytoplasmic portion of the chain corresponds to 45 to 52; it reads VMVVLEPQ. A helical transmembrane segment spans residues 53-73; the sequence is LHSPMYFFLGNLSCLDISYSS. The Extracellular segment spans residues 74-97; that stretch reads VTLPKLLVNLVCSRRAISFLGCIT. Cysteine 95 and cysteine 187 are joined by a disulfide. A helical membrane pass occupies residues 98–118; the sequence is QLHFFHFLGSTEAILLAIMAF. Residues 119–137 are Cytoplasmic-facing; the sequence is DRFVAICNPLRYTVIMNPQ. Residues 138-158 traverse the membrane as a helical segment; the sequence is VCILLAAAAWLISFFYALMHS. Residues 159-195 lie on the Extracellular side of the membrane; it reads VMTAHLSFCGSQKLNHFFYDVKPLLELACSDTLLNQW. A helical membrane pass occupies residues 196 to 215; the sequence is LLSIVTGSISMGAFFLTLLS. Residues 216–236 lie on the Cytoplasmic side of the membrane; that stretch reads CFYVIGFLLFKNRSCRILHKA. A helical membrane pass occupies residues 237–257; it reads LSTCASHFMVVCLFYGPVGFT. Over 258–270 the chain is Extracellular; sequence YIRPASATSMIQD. A helical membrane pass occupies residues 271 to 291; that stretch reads RIMAIMYSAVTPVLNPLIYTL. At 292–316 the chain is on the cytoplasmic side; it reads RNKEVMMALKKIFGRKLFKDWQQHH.

This sequence belongs to the G-protein coupled receptor 1 family.

The protein resides in the cell membrane. In terms of biological role, odorant receptor. The sequence is that of Olfactory receptor 12D3 (OR12D3) from Homo sapiens (Human).